Here is a 150-residue protein sequence, read N- to C-terminus: 16.9 kDa class I heat shock protein 1 (150 aa).

An important for thermostability under elevated temperature region spans residues 1–42 (MSLVRRSNVFDPFSLDLWDPFDSVFRSVVPATSDNDTAAFAN). One can recognise a sHSP domain in the interval 36–150 (DTAAFANARI…PEVKAIEISG (115 aa)).

It belongs to the small heat shock protein (HSP20) family. Forms oligomeric structures.

It is found in the cytoplasm. The polypeptide is 16.9 kDa class I heat shock protein 1 (HSP16.9A) (Oryza sativa subsp. japonica (Rice)).